A 535-amino-acid polypeptide reads, in one-letter code: tRNA-2-methylthio-N(6)-dimethylallyladenosine synthase (535 aa).

An MTTase N-terminal domain is found at 24–139 (RTYEVRTFGC…LPRLLERARH (116 aa)). Residues Cys33, Cys68, Cys102, Cys176, Cys180, and Cys183 each coordinate [4Fe-4S] cluster. Residues 162 to 392 (RDSSFSGWVS…IALQERISLE (231 aa)) form the Radical SAM core domain. The TRAM domain maps to 395-465 (EKLIGRDVEL…PHYLIADAAG (71 aa)). Positions 512 to 535 (RTREPLTSPGVGTMPLYDPTDGQR) are disordered.

The protein belongs to the methylthiotransferase family. MiaB subfamily. As to quaternary structure, monomer. [4Fe-4S] cluster is required as a cofactor.

It is found in the cytoplasm. The enzyme catalyses N(6)-dimethylallyladenosine(37) in tRNA + (sulfur carrier)-SH + AH2 + 2 S-adenosyl-L-methionine = 2-methylsulfanyl-N(6)-dimethylallyladenosine(37) in tRNA + (sulfur carrier)-H + 5'-deoxyadenosine + L-methionine + A + S-adenosyl-L-homocysteine + 2 H(+). In terms of biological role, catalyzes the methylthiolation of N6-(dimethylallyl)adenosine (i(6)A), leading to the formation of 2-methylthio-N6-(dimethylallyl)adenosine (ms(2)i(6)A) at position 37 in tRNAs that read codons beginning with uridine. The polypeptide is tRNA-2-methylthio-N(6)-dimethylallyladenosine synthase (Leifsonia xyli subsp. xyli (strain CTCB07)).